Here is a 144-residue protein sequence, read N- to C-terminus: Large ribosomal subunit protein uL15 (144 aa).

The tract at residues 1-53 (MRLNTLSPAEGAKHAPKRLGRGIGSGLGKTGGRGHKGQNSRSGGGVRRGFEGG) is disordered. The span at 21–31 (RGIGSGLGKTG) shows a compositional bias: gly residues.

This sequence belongs to the universal ribosomal protein uL15 family. Part of the 50S ribosomal subunit.

Functionally, binds to the 23S rRNA. The chain is Large ribosomal subunit protein uL15 from Pectobacterium atrosepticum (strain SCRI 1043 / ATCC BAA-672) (Erwinia carotovora subsp. atroseptica).